The sequence spans 112 residues: Putative pterin-4-alpha-carbinolamine dehydratase (112 aa).

This sequence belongs to the pterin-4-alpha-carbinolamine dehydratase family.

The enzyme catalyses (4aS,6R)-4a-hydroxy-L-erythro-5,6,7,8-tetrahydrobiopterin = (6R)-L-erythro-6,7-dihydrobiopterin + H2O. The sequence is that of Putative pterin-4-alpha-carbinolamine dehydratase from Shewanella piezotolerans (strain WP3 / JCM 13877).